We begin with the raw amino-acid sequence, 74 residues long: Small ribosomal subunit protein bS18 (74 aa).

It belongs to the bacterial ribosomal protein bS18 family. As to quaternary structure, part of the 30S ribosomal subunit. Forms a tight heterodimer with protein bS6.

In terms of biological role, binds as a heterodimer with protein bS6 to the central domain of the 16S rRNA, where it helps stabilize the platform of the 30S subunit. This Zymomonas mobilis subsp. mobilis (strain ATCC 31821 / ZM4 / CP4) protein is Small ribosomal subunit protein bS18.